We begin with the raw amino-acid sequence, 448 residues long: Integrator complex subunit 15 (448 aa).

This sequence belongs to the Integrator subunit 15 family. In terms of assembly, component of the Integrator complex, composed of core subunits INTS1, INTS2, INTS3, INTS4, INTS5, INTS6, INTS7, INTS8, INTS9/RC74, INTS10, INTS11/CPSF3L, INTS12, INTS13, INTS14 and INTS15. The core complex associates with protein phosphatase 2A subunits PPP2CA and PPP2R1A, to form the Integrator-PP2A (INTAC) complex. INTS15 is part of the tail subcomplex, composed of INTS10, INTS13, INTS14 and INTS15.

The protein resides in the nucleus. Its subcellular location is the chromosome. Functionally, component of the integrator complex, a multiprotein complex that terminates RNA polymerase II (Pol II) transcription in the promoter-proximal region of genes. The integrator complex provides a quality checkpoint during transcription elongation by driving premature transcription termination of transcripts that are unfavorably configured for transcriptional elongation: the complex terminates transcription by (1) catalyzing dephosphorylation of the C-terminal domain (CTD) of Pol II subunit POLR2A/RPB1 and SUPT5H/SPT5, (2) degrading the exiting nascent RNA transcript via endonuclease activity and (3) promoting the release of Pol II from bound DNA. The integrator complex is also involved in terminating the synthesis of non-coding Pol II transcripts, such as enhancer RNAs (eRNAs), small nuclear RNAs (snRNAs), telomerase RNAs and long non-coding RNAs (lncRNAs). INTS15 is part of the integrator tail module that acts as a platform for the recruitment of transcription factors at promoters. Within the integrator complex, INTS15 is required to bridge different integrator modules. In Mus musculus (Mouse), this protein is Integrator complex subunit 15.